Reading from the N-terminus, the 78-residue chain is Calcium/calmodulin-dependent protein kinase II inhibitor 1 (78 aa).

The segment at 41 to 68 is CAMK2 inhibitory domain; the sequence is NKRPPKLGQIGRSKRVVIEDDRIDDVLK.

Belongs to the CAMK2N family. As to quaternary structure, interacts with CAMK2B; the presence of Ca(2+)/calmodulin increases the interaction but is not essential. Interacts with CAMK2A; this interaction requires CAMK2A activation by Ca(2+).

Its subcellular location is the synapse. The protein localises to the cell projection. The protein resides in the dendrite. It is found in the postsynaptic density. Its function is as follows. Potent and specific inhibitor of CaM-kinase II (CAMK2). Plays a role in the maintenance of long-term retrieval-induced memory in response to contextual fear. Modulates blood pressure and vascular reactivity via regulation of CAMK2 activity in addition to regulation of left ventricular mass. Mediates the NLRP3 inflammasome in cardiomyocytes via acting as an inhibitor of the MAPK14/p38 and MAPK8/JNK pathways, thereby regulating ventricular remodeling and cardiac rhythm post-myocardial infarction. Negatively effects insulin sensitivity and promotes lipid formation in adipose tissues independent of CAMK2 signaling. The chain is Calcium/calmodulin-dependent protein kinase II inhibitor 1 (CAMK2N1) from Bos taurus (Bovine).